The primary structure comprises 1082 residues: Neisserial autotransporter lipoprotein NalP (1082 aa).

The N-terminal stretch at 1–27 is a signal peptide; it reads MRTTPTFPTKTFKPTAMALAVATTLSA. Residue cysteine 28 is the site of N-palmitoyl cysteine attachment. Cysteine 28 is lipidated: S-diacylglycerol cysteine. A Peptidase S8 domain is found at 110-482; that stretch reads NDAYKNLINL…WGLLDAGKAM (373 aa). Residues aspartate 138, histidine 210, and serine 426 each act as charge relay system in the active site. One can recognise an Autotransporter domain in the interval 808-1082; it reads DGLDHNGTGL…SGRVGVGYRF (275 aa).

This sequence belongs to the peptidase S8 family. Probably auto-processes to yield a 68-70 kDa form and a C-terminal 30 kDa translocator domain; upon overexpression in situ and in E.coli full-length protein is seen as well as (probably) auto-processed forms of 68-70 kDa and 30 kDa in size, suggesting this may have protease activity.

The protein resides in the cell outer membrane. It localises to the cell surface. Its subcellular location is the secreted. It is found in the host cytoplasm. The protein localises to the host perinuclear region. Cleavage of host complement factor C3 is inhibited by PMSF. Functionally, major human immunogenic protein, detected in patients recovering from meningitidis. Autotransporter with a secreted protease domain involved in processing other autotransporter proteins including App, IgA, LbpB and NHBA. Probably autoprocesses to release the about 70 kDa passenger domain. Both cell surface protein (Neisserial autotransporter lipoprotein NalP) and the passenger domain cleave human (host) complement factor C3, generating a shorter alpha chain and a longer beta chain than normal. Uptake of a passenger domain fragment (residues 101-784) by human cells increases cell metabolic activity; the serine protease activity is required for this increase. In terms of biological role, cleaves human (host) complement factor C3, generating a shorter alpha chain and a longer beta chain than normal. Does not act on mouse or rabbit C3. Cleavage causes C3b degradation by human CFI and CFH, and thus decreases deposition of C3b on the bacteria surface and probably facilitates complement escape. Its function is as follows. Plays a role in extracellular-DNA (eDNA) mediated biofilm formation. In some strains (including cc32 strain MC58) eDNA stimulates biofilm formation. When NalP is not expressed (and no longer processes NHBA or IgA) biofilm formation increases. In Neisseria meningitidis serogroup B (strain ATCC BAA-335 / MC58), this protein is Neisserial autotransporter lipoprotein NalP.